The following is a 192-amino-acid chain: GTP cyclohydrolase-2 (192 aa).

50–54 (RLHSE) contributes to the GTP binding site. Residues cysteine 55, cysteine 66, and cysteine 68 each contribute to the Zn(2+) site. GTP is bound by residues 92–94 (EGR) and threonine 114. Aspartate 126 serves as the catalytic Proton acceptor. The active-site Nucleophile is arginine 128. Positions 149 and 154 each coordinate GTP.

Belongs to the GTP cyclohydrolase II family. Zn(2+) is required as a cofactor.

The enzyme catalyses GTP + 4 H2O = 2,5-diamino-6-hydroxy-4-(5-phosphoribosylamino)-pyrimidine + formate + 2 phosphate + 3 H(+). The protein operates within cofactor biosynthesis; riboflavin biosynthesis; 5-amino-6-(D-ribitylamino)uracil from GTP: step 1/4. Catalyzes the conversion of GTP to 2,5-diamino-6-ribosylamino-4(3H)-pyrimidinone 5'-phosphate (DARP), formate and pyrophosphate. The chain is GTP cyclohydrolase-2 from Helicobacter pylori (strain J99 / ATCC 700824) (Campylobacter pylori J99).